The primary structure comprises 99 residues: Ferredoxin, heterocyst (99 aa).

Positions 4–96 constitute a 2Fe-2S ferredoxin-type domain; sequence YQVRLINKKE…NCTIKTHQEP (93 aa). Residues C42, C47, C50, and C80 each coordinate [2Fe-2S] cluster.

It belongs to the 2Fe2S plant-type ferredoxin family. It depends on [2Fe-2S] cluster as a cofactor.

In terms of biological role, ferredoxins are iron-sulfur proteins that transfer electrons in a wide variety of metabolic reactions. The polypeptide is Ferredoxin, heterocyst (fdxH) (Microchaete diplosiphon (Fremyella diplosiphon)).